We begin with the raw amino-acid sequence, 336 residues long: Pentalenene synthase (336 aa).

Mg(2+) is bound by residues Asp-80, Asp-84, Asn-219, Ser-223, and Glu-227. Residues 80–84 (DDLFD) carry the DDXXD motif motif.

This sequence belongs to the terpene synthase family. As to quaternary structure, monomer. Requires Mg(2+) as cofactor.

The enzyme catalyses (2E,6E)-farnesyl diphosphate = pentalenene + diphosphate. Its pathway is antibiotic biosynthesis; neopentalenolactone biosynthesis. In terms of biological role, catalyzes the cyclization of farnesyl diphosphate (FPP) to the tricyclic sesquiterpene pentalenene in the biosynthesis of neopentalenolactone antibiotic. In Streptomyces avermitilis (strain ATCC 31267 / DSM 46492 / JCM 5070 / NBRC 14893 / NCIMB 12804 / NRRL 8165 / MA-4680), this protein is Pentalenene synthase (ptlA).